We begin with the raw amino-acid sequence, 228 residues long: 7-cyano-7-deazaguanine synthase (228 aa).

7–17 contributes to the ATP binding site; sequence LSGGLDSAVNL. The Zn(2+) site is built by C192, C200, C203, and C206.

The protein belongs to the QueC family. Homodimer. Zn(2+) serves as cofactor.

It carries out the reaction 7-carboxy-7-deazaguanine + NH4(+) + ATP = 7-cyano-7-deazaguanine + ADP + phosphate + H2O + H(+). It participates in purine metabolism; 7-cyano-7-deazaguanine biosynthesis. In terms of biological role, catalyzes the ATP-dependent conversion of 7-carboxy-7-deazaguanine (CDG) to 7-cyano-7-deazaguanine (preQ(0)). This Desulforamulus reducens (strain ATCC BAA-1160 / DSM 100696 / MI-1) (Desulfotomaculum reducens) protein is 7-cyano-7-deazaguanine synthase.